We begin with the raw amino-acid sequence, 96 residues long: Tenecin-3 (96 aa).

A signal peptide spans 1-18 (MKTFVICLILVVAVSAAP). The disordered stretch occupies residues 19-96 (DHHDGHLGGH…HQGGYKTHGH (78 aa)). 12 consecutive repeat copies span residues 23-26 (GHLG), 31-34 (GHQG), 35-38 (GQQG), 39-42 (GHLG), 43-46 (GQQG), 47-50 (GHLG), 51-54 (GHQG), 59-62 (GHLG), 63-66 (GHQG), 67-70 (GIGG), 77-80 (GQHG), and 86-89 (GHQG). The segment at 23–89 (GHLGGHQTGH…GPGTGAGHQG (67 aa)) is 12 X 4 AA repeats of G-X-X-G. Gly residues predominate over residues 26-89 (GGHQTGHQGG…GPGTGAGHQG (64 aa)).

It to H.diomphalia holotricin 3.

Its subcellular location is the secreted. Its function is as follows. Antifungal heat stable protein produced in response to injury. It is active against C.albicans. No antibacterial activity against Gram-positive and Gram-negative bacteria. The chain is Tenecin-3 from Tenebrio molitor (Yellow mealworm beetle).